Consider the following 1135-residue polypeptide: WASH complex subunit 4 (1135 aa).

A2 carries the post-translational modification N-acetylalanine.

The protein belongs to the SWIP family. Probable component of the WASH complex.

In Dictyostelium discoideum (Social amoeba), this protein is WASH complex subunit 4.